Consider the following 354-residue polypeptide: MGAPATAASGGGDDDDRDVVFEYLLCTEEDAASAGSFFQQLQGPAPAVSSSPSTTTATAPAAAGSCDDGGEEEEEEVWTVDVVAELIGGEAERSHSPRADYPGRLRSGRPADLAARADSVAWILKVRELYGMLPVTAYLAVSYMDRFLSLHRLPGNGWAMQLLAVTCLSLAAKMEETLVPSILDLQMEDARYIFEHRTIFRMELLVLDALDWRLRSITPFTFMYLFADKVDPNGKHIRELIHQATQVTLATIHDTEFLDHCPSSIAAAAVLCASSEIMQLVSIDHGTLVSWRIIGLDEEAIIRCYRLMQQLISSNNVGRESTEITMATTTTTATTAVSSEEVVSSSPPSKRRKM.

2 disordered regions span residues 37 to 74 (FFQQ…EEEE) and 331 to 354 (TTAT…RRKM). Low complexity-rich tracts occupy residues 44-66 (PAPA…AGSC) and 331-346 (TTAT…VSSS).

Belongs to the cyclin family. Cyclin D subfamily.

This chain is Cyclin-D1-2 (CYCD1-2), found in Oryza sativa subsp. japonica (Rice).